We begin with the raw amino-acid sequence, 141 residues long: Large ribosomal subunit protein uL11 (141 aa).

This sequence belongs to the universal ribosomal protein uL11 family. In terms of assembly, part of the ribosomal stalk of the 50S ribosomal subunit. Interacts with L10 and the large rRNA to form the base of the stalk. L10 forms an elongated spine to which L12 dimers bind in a sequential fashion forming a multimeric L10(L12)X complex. Post-translationally, one or more lysine residues are methylated.

Forms part of the ribosomal stalk which helps the ribosome interact with GTP-bound translation factors. The chain is Large ribosomal subunit protein uL11 from Streptococcus suis (strain 98HAH33).